The following is a 1985-amino-acid chain: Histone-lysine N-methyltransferase SETD1B (1985 aa).

Residues 1-11 show a composition bias toward basic residues; it reads MENSHPHHHHQ. Residues 1–25 are disordered; sequence MENSHPHHHHQQPPPQPGPSGERRN. Positions 67–97 are interaction with WDR82; that stretch reads VEDPRVVGIWTKNKELELSVPKFKIDEFYVG. The region spanning 92-180 is the RRM domain; it reads DEFYVGPVPP…NIIHVELDTK (89 aa). Disordered stretches follow at residues 234 to 304, 353 to 710, 955 to 1480, 1519 to 1624, and 1658 to 1687; these read GCGS…QDPT, GSSG…PPPA, VKRK…RTGP, QLPP…STKL, and RGPWRRPPKKRHEDLVAPSASPEPSPPQPL. Polar residues-rich tracts occupy residues 242 to 258, 264 to 273, 281 to 304, and 353 to 365; these read VTPNSGGTPFSQDTAYS, TPNSYGQGTP, PFSQDSSYSSRQPTPSYLFSQDPT, and GSSGTPFKAQSQD. Positions 366–381 are enriched in low complexity; the sequence is ATTFAHTPPPAQTATA. 3 stretches are compositionally biased toward pro residues: residues 393-404, 423-433, and 440-449; these read TPAPPFPPPPEE, PAPPPLPPAEP, and GTPPGPPPPD. Over residues 484–512 the composition is skewed to basic and acidic residues; the sequence is EKPHDSLDSRIEMLLKEQRTKLPFLREQD. Residues 522–535 show a composition bias toward low complexity; it reads SPISSSSSQLSPLS. A compositionally biased stretch (pro residues) spans 583-594; it reads PRPPPEPGPPDP. A compositionally biased stretch (acidic residues) spans 628–637; it reads EDMEISDDEM. Residues 650-669 show a composition bias toward low complexity; the sequence is PMVVTPGAGAVAAPNVLAPN. Residues 670 to 710 show a composition bias toward pro residues; that stretch reads LPLPPPPGFPPLPPPPPPPPPQPGFPMPPPLPPPPPPPPPA. 2 positions are modified to phosphoserine: S977 and S985. Basic and acidic residues predominate over residues 986 to 1006; the sequence is ERERDRDIADAPCELTKRDPK. S1022 carries the post-translational modification Phosphoserine. Low complexity predominate over residues 1032–1055; the sequence is LSASSSSSASSSSGSSTTSPSSSA. A compositionally biased stretch (acidic residues) spans 1058 to 1083; the sequence is KEEEDRESTEEEEEEEEEEAEEEEEE. Positions 1087-1097 are enriched in low complexity; it reads SRISSPSSSSS. Acidic residues predominate over residues 1100 to 1120; sequence KDDEDDNEADSDGQIDSDIDD. Over residues 1143 to 1178 the composition is skewed to low complexity; that stretch reads SITTSKAPAESSSSSSESSGSSEFESSSESESSSSS. Positions 1179 to 1202 are enriched in acidic residues; it reads SEDEEEMTVPGVEEEEEEEEEEEK. Positions 1205-1217 are enriched in low complexity; it reads AMAAATVVAMAEE. Over residues 1247-1261 the composition is skewed to acidic residues; sequence GTEEEVDIEAEDEVP. Phosphoserine is present on residues S1283, S1301, and S1354. Positions 1331-1373 are enriched in pro residues; it reads EPPPMLSLPLQPPLPPPRLLRPPSPPPEPETPEPPKPPVPLEP. The segment covering 1402 to 1442 has biased composition (low complexity); that stretch reads PGGEPPLSGSSSGLSLSSPQVPGSPFSYPSPSPGLSSGGLP. Positions 1535–1544 are enriched in basic residues; it reads IKRKPGRPRR. Pro residues-rich tracts occupy residues 1600–1619 and 1678–1687; these read PAPPPPLPPQPPPPPPPPPV and SPEPSPPQPL. A phosphoserine mark is found at S1678 and S1682. The WDR5 interaction motif (WIN) motif lies at 1764 to 1769; it reads GCARSE. The segment at 1786–1819 is disordered; that stretch reads SRASTDEPPMDTQGMSIPAQPHASTRAGSERRSE. The RxxxRR motif signature appears at 1817 to 1822; sequence RSEQRR. One can recognise an SET domain in the interval 1846 to 1963; sequence KKLKFCKSHI…VNEEITYDYK (118 aa). Y1962 lines the S-adenosyl-L-methionine pocket. Residues 1969-1985 form the Post-SET domain; that stretch reads VKIPCLCGSENCRGTLN.

It belongs to the class V-like SAM-binding methyltransferase superfamily. As to quaternary structure, component of the SET1B/COMPASS complex composed of the catalytic subunit SETD1B, WDR5, WDR82, RBBP5, ASH2L/ASH2, CXXC1/CFP1, HCFC1, DPY30 homotrimer and BOD1. Forms a core complex with the evolutionary conserved subcomplex WRAD composed of WDR5, RBBP5, ASH2L/ASH2 and DPY30 subunits; WRAD differentially stimulates the methyltransferase activity. Interacts with HCFC1 and ASH2L/ASH2. Interacts (via the RRM domain) with WDR82. Interacts (via the RRM domain) with hyperphosphorylated C-terminal domain (CTD) of RNA polymerase II large subunit (POLR2A) only in the presence of WDR82. Binds specifically to CTD heptad repeats phosphorylated on 'Ser-5' of each heptad. Interacts with RBM15. Interacts (via WIN motif) with WDR5. Widely expressed.

The protein resides in the nucleus. It localises to the nucleus speckle. It is found in the chromosome. Its subcellular location is the cytoplasm. The enzyme catalyses L-lysyl(4)-[histone H3] + S-adenosyl-L-methionine = N(6)-methyl-L-lysyl(4)-[histone H3] + S-adenosyl-L-homocysteine + H(+). It carries out the reaction N(6)-methyl-L-lysyl(4)-[histone H3] + S-adenosyl-L-methionine = N(6),N(6)-dimethyl-L-lysyl(4)-[histone H3] + S-adenosyl-L-homocysteine + H(+). The catalysed reaction is N(6),N(6)-dimethyl-L-lysyl(4)-[histone H3] + S-adenosyl-L-methionine = N(6),N(6),N(6)-trimethyl-L-lysyl(4)-[histone H3] + S-adenosyl-L-homocysteine + H(+). Functionally, histone methyltransferase that catalyzes methyl group transfer from S-adenosyl-L-methionine to the epsilon-amino group of 'Lys-4' of histone H3 (H3K4) via a non-processive mechanism. Part of chromatin remodeling machinery, forms H3K4me1, H3K4me2 and H3K4me3 methylation marks at active chromatin sites where transcription and DNA repair take place. Plays an essential role in regulating the transcriptional programming of multipotent hematopoietic progenitor cells and lymphoid lineage specification during hematopoiesis. This Mus musculus (Mouse) protein is Histone-lysine N-methyltransferase SETD1B (Setd1b).